Reading from the N-terminus, the 274-residue chain is Purine nucleoside phosphorylase YlmD (274 aa).

46–47 (LH) provides a ligand contact to inosine. His80, Cys125, His142, Cys182, Cys183, Cys242, and Cys245 together coordinate Zn(2+). Arg262 contacts inosine.

The protein belongs to the purine nucleoside phosphorylase YfiH/LACC1 family. It depends on Zn(2+) as a cofactor.

The enzyme catalyses adenosine + phosphate = alpha-D-ribose 1-phosphate + adenine. It carries out the reaction S-methyl-5'-thioadenosine + phosphate = 5-(methylsulfanyl)-alpha-D-ribose 1-phosphate + adenine. It catalyses the reaction inosine + phosphate = alpha-D-ribose 1-phosphate + hypoxanthine. The catalysed reaction is adenosine + H2O + H(+) = inosine + NH4(+). Its function is as follows. Purine nucleoside enzyme that catalyzes the phosphorolysis of adenosine and inosine nucleosides, yielding D-ribose 1-phosphate and the respective free bases, adenine and hypoxanthine. Also catalyzes the phosphorolysis of S-methyl-5'-thioadenosine into adenine and S-methyl-5-thio-alpha-D-ribose 1-phosphate. Also has adenosine deaminase activity. This is Purine nucleoside phosphorylase YlmD from Geobacillus stearothermophilus (strain DSM 13240 / CIP 106956 / 10).